Reading from the N-terminus, the 116-residue chain is uncharacterized protein (116 aa).

The signal sequence occupies residues 1 to 21; it reads MAPSTAMLIMGLLKLPRLRLA.

This is an uncharacterized protein from Saccharomyces cerevisiae (strain ATCC 204508 / S288c) (Baker's yeast).